The following is a 382-amino-acid chain: Anhydro-N-acetylmuramic acid kinase (382 aa).

ATP is bound at residue 9 to 16 (GTSLDGID).

It belongs to the anhydro-N-acetylmuramic acid kinase family.

The enzyme catalyses 1,6-anhydro-N-acetyl-beta-muramate + ATP + H2O = N-acetyl-D-muramate 6-phosphate + ADP + H(+). The protein operates within amino-sugar metabolism; 1,6-anhydro-N-acetylmuramate degradation. It participates in cell wall biogenesis; peptidoglycan recycling. Its function is as follows. Catalyzes the specific phosphorylation of 1,6-anhydro-N-acetylmuramic acid (anhMurNAc) with the simultaneous cleavage of the 1,6-anhydro ring, generating MurNAc-6-P. Is required for the utilization of anhMurNAc either imported from the medium or derived from its own cell wall murein, and thus plays a role in cell wall recycling. This Bacillus cereus (strain AH820) protein is Anhydro-N-acetylmuramic acid kinase.